The chain runs to 167 residues: Large ribosomal subunit protein uL10 (167 aa).

It belongs to the universal ribosomal protein uL10 family. As to quaternary structure, part of the ribosomal stalk of the 50S ribosomal subunit. The N-terminus interacts with L11 and the large rRNA to form the base of the stalk. The C-terminus forms an elongated spine to which L12 dimers bind in a sequential fashion forming a multimeric L10(L12)X complex.

Functionally, forms part of the ribosomal stalk, playing a central role in the interaction of the ribosome with GTP-bound translation factors. The chain is Large ribosomal subunit protein uL10 from Streptococcus thermophilus (strain CNRZ 1066).